Reading from the N-terminus, the 370-residue chain is Phosphate acyltransferase (370 aa).

Positions 349-370 are disordered; that stretch reads SAGRAGQDAPDEMAAPGRSEKR.

Belongs to the PlsX family. In terms of assembly, homodimer. Probably interacts with PlsY.

The protein localises to the cytoplasm. It catalyses the reaction a fatty acyl-[ACP] + phosphate = an acyl phosphate + holo-[ACP]. It functions in the pathway lipid metabolism; phospholipid metabolism. Its function is as follows. Catalyzes the reversible formation of acyl-phosphate (acyl-PO(4)) from acyl-[acyl-carrier-protein] (acyl-ACP). This enzyme utilizes acyl-ACP as fatty acyl donor, but not acyl-CoA. The polypeptide is Phosphate acyltransferase (Cereibacter sphaeroides (strain ATCC 17023 / DSM 158 / JCM 6121 / CCUG 31486 / LMG 2827 / NBRC 12203 / NCIMB 8253 / ATH 2.4.1.) (Rhodobacter sphaeroides)).